Consider the following 310-residue polypeptide: Signal peptidase I (310 aa).

A helical membrane pass occupies residues 5–25; sequence LSSFLLASSLITGTLWIINKI. Residues 26-57 are Cytoplasmic-facing; the sequence is LSHNLLDSKIPFNIKKSKIYYKSKQVVQTFAS. The chain crosses the membrane as a helical span at residues 58 to 78; that stretch reads FFPILIIVFIIRTFICEPFQI. Over 79-310 the chain is Extracellular; sequence PSESMMPTLL…IQFDRIGNIY (232 aa). Residues Ser-82 and Lys-137 contribute to the active site.

It belongs to the peptidase S26 family.

The protein resides in the cell membrane. It catalyses the reaction Cleavage of hydrophobic, N-terminal signal or leader sequences from secreted and periplasmic proteins.. In Buchnera aphidicola subsp. Baizongia pistaciae (strain Bp), this protein is Signal peptidase I (lepB).